We begin with the raw amino-acid sequence, 1117 residues long: Sodium-driven chloride bicarbonate exchanger (1117 aa).

The span at 1–14 (MQSGTCESFQSLSH) shows a compositional bias: polar residues. Disordered regions lie at residues 1-26 (MQSGTCESFQSLSHQRNDEEAVVDRG), 57-94 (GRKSHRRHRHRGHKHRKRDRERDSGLEDGRESPSFDTP), 244-312 (KQSE…PHQQ), and 456-475 (NGTAAHGEAEPHGGHSGPEL). At 1–508 (MQSGTCESFQ…DFTDALSLQC (508 aa)) the chain is on the cytoplasmic side. Basic and acidic residues predominate over residues 15–26 (QRNDEEAVVDRG). Residues 58 to 75 (RKSHRRHRHRGHKHRKRD) show a composition bias toward basic residues. Positions 76–89 (RERDSGLEDGRESP) are enriched in basic and acidic residues. Residue Ser88 is modified to Phosphoserine. Thr93 is modified (phosphothreonine). Residues 247–263 (EPNSMDKNAGQVVSPQS) show a composition bias toward polar residues. Ser275 is modified (phosphoserine). The helical transmembrane segment at 509-529 (LASFLFLYCACMSPVITFGGL) threads the bilayer. The Extracellular portion of the chain corresponds to 530-537 (LGEATEGR). A helical transmembrane segment spans residues 538–558 (ISAIESLFGASMTGIAYSLFG). Residues 559–561 (GQP) lie on the Cytoplasmic side of the membrane. A helical membrane pass occupies residues 562 to 582 (LTILGSTGPVLVFEKILFKFC). Over 583–595 (KEYGLSYLSLRAS) the chain is Extracellular. Residues 596 to 616 (IGLWTATLCIILVATDASSLV) traverse the membrane as a helical segment. Over 617–625 (CYITRFTEE) the chain is Cytoplasmic. The helical transmembrane segment at 626–646 (AFASLICIIFIYEALEKLFEL) threads the bilayer. At 647 to 719 (SEAYPINMHN…VGRACGHEHP (73 aa)) the chain is on the extracellular side. Residues Asn673, Asn676, Asn686, and Asn696 are each glycosylated (N-linked (GlcNAc...) asparagine). A helical membrane pass occupies residues 720-740 (YVPDVLFWSVILFFSTVTLSA). Topologically, residues 741–761 (TLKQFKTSRYFPTKVRSIVSD) are cytoplasmic. A helical membrane pass occupies residues 762–782 (FAVFLTILCMVLIDYAIGIPS). Residues 783–808 (PKLQVPSVFKPTRDDRGWFVTPLGPN) are Extracellular-facing. Residues 809 to 829 (PWWTVIAAIIPALLCTILIFM) form a helical membrane-spanning segment. The Cytoplasmic portion of the chain corresponds to 830–854 (DQQITAVIINRKEHKLKKGCGYHLD). A helical membrane pass occupies residues 855–875 (LLMVAVMLGVCSIMGLPWFVA). The Extracellular portion of the chain corresponds to 876–911 (ATVLSITHVNSLKLESECSAPGEQPKFLGIREQRVT). Residues 912–932 (GLMIFILMGSSVFMTSILKFI) form a helical membrane-spanning segment. Residues 933–934 (PM) are Cytoplasmic-facing. The chain crosses the membrane as a helical span at residues 935–955 (PVLYGVFLYMGASSLKGIQFF). The Extracellular segment spans residues 956-997 (DRIKLFWMPAKHQPDFIYLRHVPLRKVHLFTVIQMSCLGLLW). A helical transmembrane segment spans residues 998–1018 (IIKVSRAAIVFPMMVLALVFV). Residues 1019–1117 (RKLMDFLFTK…SSFPSKSSPS (99 aa)) lie on the Cytoplasmic side of the membrane. Phosphoserine is present on residues Ser1056 and Ser1084.

Belongs to the anion exchanger (TC 2.A.31) family. In terms of processing, N-glycosylated.

The protein localises to the basolateral cell membrane. It is found in the apical cell membrane. The protein resides in the cell projection. Its subcellular location is the dendrite. It localises to the axon. The protein localises to the perikaryon. It is found in the presynapse. The protein resides in the postsynapse. Its function is as follows. Sodium/bicarbonate cotransporter which plays an important role in regulating intracellular pH. Has been shown to act as a sodium/bicarbonate cotransporter in exchange for intracellular chloride. Has also been shown to act as a sodium/biocarbonate cotransporter which does not couple net influx of bicarbonate to net efflux of chloride, with the observed chloride efflux being due to chloride self-exchange. Controls neuronal pH and may contribute to the secretion of cerebrospinal fluid. Acting on presynaptic intracellular pH, it promotes GABA release, reduces the excitability of CA1 pyramidal neurons, and modulates short-term synaptic plasticity. Required in retinal cells to maintain normal pH which is necessary for normal vision. In the kidney, likely to mediate bicarbonate reclamation in the apical membrane of the proximal tubules. In Bos taurus (Bovine), this protein is Sodium-driven chloride bicarbonate exchanger.